A 345-amino-acid polypeptide reads, in one-letter code: NADH-quinone oxidoreductase subunit H (345 aa).

8 helical membrane-spanning segments follow: residues 15–35 (MLLQGLAVIAFVMGSLIFMVY), 82–102 (FVYFLAPFLSMMLALFAFVVI), 115–135 (VGILFIFAASSLEVYGVIMGG), 161–181 (LGLIIIGIIISTGSMNLTAIV), 190–210 (LLNWYWLPHLPMVVLFFVSAL), 240–262 (YLLFMAGEYIAMYLMCALLSLLF), 278–298 (WWMVIKMWFWFYMFAMVKAIV), and 309–329 (IGWKVFLPLSLGWVVLVAILA).

This sequence belongs to the complex I subunit 1 family. NDH-1 is composed of at least 14 different subunits, Nqo1 to Nqo14. The complex has a L-shaped structure, with the hydrophobic arm (subunits Nqo7, Nqo8, Nqo10 to Nqo14) embedded in the inner membrane and the hydrophilic peripheral arm (subunits Nqo1 to Nqo6, Nqo9) protruding into the bacterial cytoplasm. The hydrophilic domain contains all the redox centers. NADH-quinone oxidoreductase forms a supercomplex with ubiquinol-cytochrome c reductase complex (complex III or cytochrome b-c1 complex) and cytochrome c oxidase (complex IV), which stabilizes the NADH-quinone oxidoreductase complex.

The protein localises to the cell inner membrane. It catalyses the reaction a quinone + NADH + 5 H(+)(in) = a quinol + NAD(+) + 4 H(+)(out). In terms of biological role, NDH-1 shuttles electrons from NADH, via FMN and iron-sulfur (Fe-S) centers, to quinones in the respiratory chain. The immediate electron acceptor for the enzyme in this species is believed to be ubiquinone. Couples the redox reaction to proton translocation (for every two electrons transferred, four hydrogen ions are translocated across the cytoplasmic membrane), and thus conserves the redox energy in a proton gradient. This subunit may bind ubiquinone. The protein is NADH-quinone oxidoreductase subunit H of Paracoccus denitrificans (strain Pd 1222).